A 296-amino-acid polypeptide reads, in one-letter code: Peroxidase P7 (296 aa).

The residue at position 1 (glutamine 1) is a Pyrrolidone carboxylic acid. Cystine bridges form between cysteine 11-cysteine 91, cysteine 44-cysteine 49, cysteine 97-cysteine 292, and cysteine 176-cysteine 201. Histidine 42 acts as the Proton acceptor in catalysis. Ca(2+) contacts are provided by aspartate 43, valine 46, glycine 48, aspartate 50, and serine 52. Residue proline 139 participates in substrate binding. Histidine 169 is a heme b binding site. Position 170 (threonine 170) interacts with Ca(2+). Asparagine 185 is a glycosylation site (N-linked (GlcNAc...) asparagine). Aspartate 216, serine 219, and aspartate 224 together coordinate Ca(2+).

This sequence belongs to the peroxidase family. Classical plant (class III) peroxidase subfamily. The cofactor is Ca(2+). It depends on heme b as a cofactor.

It catalyses the reaction 2 a phenolic donor + H2O2 = 2 a phenolic radical donor + 2 H2O. Removal of H(2)O(2), oxidation of toxic reductants, biosynthesis and degradation of lignin, suberization, auxin catabolism, response to environmental stresses such as wounding, pathogen attack and oxidative stress. These functions might be dependent on each isozyme/isoform in each plant tissue. The chain is Peroxidase P7 from Brassica rapa subsp. rapa (Turnip).